A 614-amino-acid chain; its full sequence is Cathepsin F (614 aa).

An N-terminal signal peptide occupies residues 1-20 (MRLFAAATVALVLLLGQAAG). A propeptide spans 21–393 (EELAEERAGQ…AAVVPAYHGE (373 aa)) (activation peptide). Residues 25–50 (EERAGQAQGDAESTESSETTTDQAVS) form a disordered region. Residues 29–45 (GQAQGDAESTESSETTT) show a composition bias toward low complexity. N151 carries an N-linked (GlcNAc...) asparagine glycan. 2 disulfides stabilise this stretch: C415/C456 and C449/C489. C418 is an active-site residue. Residues N492 and N510 are each glycosylated (N-linked (GlcNAc...) asparagine). The cysteines at positions 548 and 602 are disulfide-linked. Active-site residues include H555 and N581.

The protein belongs to the peptidase C1 family.

The catalysed reaction is The recombinant enzyme cleaves synthetic substrates with Phe and Leu (better than Val) in P2, with high specificity constant (kcat/Km) comparable to that of cathepsin L.. In terms of biological role, may have a role in autophagic cell death. The protein is Cathepsin F of Drosophila melanogaster (Fruit fly).